The chain runs to 229 residues: Heptahelical transmembrane protein ADIPOR2 (229 aa).

At 1 to 4 (MQGA) the chain is on the cytoplasmic side. A helical transmembrane segment spans residues 5 to 25 (ASHDAAAAAAAAAVLGGGHGV). Residues 26–30 (PRWPR) are Extracellular-facing. Residues 31–51 (MVFLVGAMTCLAISATAHLLA) traverse the membrane as a helical segment. Residues 52 to 66 (CHSRRASVVFWQLDY) are Cytoplasmic-facing. A helical membrane pass occupies residues 67 to 87 (AGISAMIVASFVPPVYYAFLC). Residues 88–92 (HRPAR) lie on the Extracellular side of the membrane. Residues 93–113 (VAYLSAISALGALVVGALLSP) form a helical membrane-spanning segment. Topologically, residues 114–124 (PCSSPRFRRLR) are cytoplasmic. A helical membrane pass occupies residues 125–145 (AALFLAMGLSGVVPALHALWL). Over 146–153 (NWGHAACY) the chain is Extracellular. Residues 154 to 174 (LALSLEVAMGLAYAAGAWFYV) traverse the membrane as a helical segment. At 175-194 (SRVPEKWRPGVFDVVGHSHQ) the chain is on the cytoplasmic side. A helical membrane pass occupies residues 195–215 (IFHVLVLVGAVTHYVAVDVLL). At 216 to 229 (NWRETVAAACSATS) the chain is on the extracellular side.

Belongs to the ADIPOR family.

It localises to the membrane. In terms of biological role, may play a role in abiotic stress response. The polypeptide is Heptahelical transmembrane protein ADIPOR2 (ADIPOR2) (Oryza sativa subsp. japonica (Rice)).